The chain runs to 344 residues: Heat-inducible transcription repressor hrcA (344 aa).

The protein belongs to the HrcA family.

Functionally, negative regulator of class I heat shock genes (grpE-dnaK-dnaJ and groELS operons). Prevents heat-shock induction of these operons. The protein is Heat-inducible transcription repressor hrcA of Streptococcus pyogenes serotype M3 (strain ATCC BAA-595 / MGAS315).